The primary structure comprises 189 residues: MAKEGLALEITELRLGLPGDNYSEISVCGSSKKKKRVLSDMMTSSALDTENENSVVSSVEDESLPVVKSQAVGWPPVCSYRRKKNNEEASKAIGYVKVSMDGVPYMRKIDLGSSNSYINLVTVLENLFGCLGIGVAKEGKKCEYIIIYEDKDRDWMLVGDVPWQMFKESCKRLRIVKRSDATGFGLQQD.

The EAR-like (transcriptional repression) signature appears at 13 to 17 (LRLGL). The PB1 domain occupies 93-178 (IGYVKVSMDG…SCKRLRIVKR (86 aa)).

This sequence belongs to the Aux/IAA family. In terms of assembly, homodimers and heterodimers. Interacts with TPL. Highly expressed in stems and flowers.

It is found in the nucleus. Aux/IAA proteins are short-lived transcriptional factors that function as repressors of early auxin response genes at low auxin concentrations. Repression is thought to result from the interaction with auxin response factors (ARFs), proteins that bind to the auxin-responsive promoter element (AuxRE). Formation of heterodimers with ARF proteins may alter their ability to modulate early auxin response genes expression. The protein is Auxin-responsive protein IAA6 (IAA6) of Arabidopsis thaliana (Mouse-ear cress).